The chain runs to 258 residues: Chaperone protein caf1M (258 aa).

The first 20 residues, 1 to 20 (MILNRLSTLGIITFGMLSFA), serve as a signal peptide directing secretion. The cysteines at positions 121 and 160 are disulfide-linked.

Belongs to the periplasmic pilus chaperone family.

It localises to the periplasm. Functionally, has a stimulatory role for the envelope antigen F1 secretion. It seems to interact with the subunit polypeptide and to prevent it from digestion by a protease. This is Chaperone protein caf1M (caf1M) from Yersinia pestis.